Consider the following 178-residue polypeptide: Imidazoleglycerol-phosphate dehydratase (178 aa).

It belongs to the imidazoleglycerol-phosphate dehydratase family.

It localises to the cytoplasm. It catalyses the reaction D-erythro-1-(imidazol-4-yl)glycerol 3-phosphate = 3-(imidazol-4-yl)-2-oxopropyl phosphate + H2O. The protein operates within amino-acid biosynthesis; L-histidine biosynthesis; L-histidine from 5-phospho-alpha-D-ribose 1-diphosphate: step 6/9. The polypeptide is Imidazoleglycerol-phosphate dehydratase (Archaeoglobus fulgidus (strain ATCC 49558 / DSM 4304 / JCM 9628 / NBRC 100126 / VC-16)).